The primary structure comprises 316 residues: Ribosomal RNA small subunit methyltransferase H (316 aa).

S-adenosyl-L-methionine is bound by residues Ala35–His37, Asp55, Phe84, Asp105, and Gln112.

This sequence belongs to the methyltransferase superfamily. RsmH family.

The protein resides in the cytoplasm. It catalyses the reaction cytidine(1402) in 16S rRNA + S-adenosyl-L-methionine = N(4)-methylcytidine(1402) in 16S rRNA + S-adenosyl-L-homocysteine + H(+). Its function is as follows. Specifically methylates the N4 position of cytidine in position 1402 (C1402) of 16S rRNA. The polypeptide is Ribosomal RNA small subunit methyltransferase H (Streptococcus pneumoniae (strain JJA)).